We begin with the raw amino-acid sequence, 266 residues long: Phosphatidylglycerol--prolipoprotein diacylglyceryl transferase (266 aa).

The next 4 membrane-spanning stretches (helical) occupy residues 14 to 34, 55 to 75, 91 to 111, and 117 to 137; these read FGPL…AFFW, FLFY…ILFY, WKGG…MWLF, and VSMF…LFFG. A 1,2-diacyl-sn-glycero-3-phospho-(1'-sn-glycerol) is bound at residue Arg-138. Transmembrane regions (helical) follow at residues 172–192, 201–221, and 235–255; these read YPTQ…ILMF, GAAS…VEFF, and WVTM…ALVV.

Belongs to the Lgt family.

It is found in the cell inner membrane. The catalysed reaction is L-cysteinyl-[prolipoprotein] + a 1,2-diacyl-sn-glycero-3-phospho-(1'-sn-glycerol) = an S-1,2-diacyl-sn-glyceryl-L-cysteinyl-[prolipoprotein] + sn-glycerol 1-phosphate + H(+). Its pathway is protein modification; lipoprotein biosynthesis (diacylglyceryl transfer). Catalyzes the transfer of the diacylglyceryl group from phosphatidylglycerol to the sulfhydryl group of the N-terminal cysteine of a prolipoprotein, the first step in the formation of mature lipoproteins. This chain is Phosphatidylglycerol--prolipoprotein diacylglyceryl transferase, found in Hydrogenovibrio crunogenus (strain DSM 25203 / XCL-2) (Thiomicrospira crunogena).